The sequence spans 556 residues: MAVFKLDALRAIDMSKLCFAISLLCAVAIATFLHKLYKARSFMRRLQREGMPMPPHHWLFGHIPVVAKIFGTLPPHAHLFFIADQVRQAYPHLDSAFYLDIWPFGPPSLMTISPELASQFTQDKSLPKYEGVRKFLKPLTGKKDLVSMEGHDWKHWRANFNPGFSASNITNMIPAMVQDVQTYRDIIRRHAVAGDIFPLELPTLAMSMDIIGRVVLDHEFNSQKAYNPLTSALIDQLAWCTIGVHSNPLEYINIARPIVHQYNAWRMNSYLDPLLKLRYETVNQRPKSKYVGDLIMSAYVKENSPDGRPTKMDPVFAEFMRAQVKLFLQAGHDTTAASIVYTFYMLQKHPESLRRLRKELDTVFGPDITATCDVLKEKPQLLSQCNFLLAVTKETLRLYPPTSTARFGLPGFYLTDSDGKRMPTENCLVVANHHGIHHNPRFWPRVEEFLPERWLVDESHPLYPVKNGWRPFERGSRNCLGQELAMTEIKLVVAIMIREFNIHDAYAENDLEKGQREKNLRVNGERAYQITRGGGHPSENFPCRVSLVANKEREIP.

The chain crosses the membrane as a helical span at residues 17–37; the sequence is LCFAISLLCAVAIATFLHKLY. Heme is bound at residue Cys479.

The protein belongs to the cytochrome P450 family. It depends on heme as a cofactor.

It localises to the membrane. The enzyme catalyses motiol + 3 reduced [NADPH--hemoprotein reductase] + 3 O2 = 4beta-carboxyl motiol + 3 oxidized [NADPH--hemoprotein reductase] + 4 H2O + 4 H(+). The protein operates within secondary metabolite biosynthesis; terpenoid biosynthesis. In terms of biological role, cytochrome P450 monooxygenase; part of the gene cluster that mediates the biosynthesis of antifungal fernane-type triterpenoid polytolypin. PolC uses motiol as a substrate and converts the methyl group at position C-4 to a carboxyl group. Within the pathway, the triterpene cyclase polA first catalyzes the cyclization of 2,3-oxidosqualene to motiol, polC converts the 4-alpha-methyl group of motiol to a carboxyl group, polB is responsible for appending a hydroxyl group at the 2-alpha position and polE is a dual functional P450, which can catalyze the formation of both the 1-beta-hydroxyl group and 10-beta-carboxyl group. This chain is Cytochrome P450 monooxygenase polC, found in Polytolypa hystricis (strain UAMH7299).